Here is a 498-residue protein sequence, read N- to C-terminus: Lysine--tRNA ligase (498 aa).

E408 and E415 together coordinate Mg(2+).

It belongs to the class-II aminoacyl-tRNA synthetase family. As to quaternary structure, homodimer. The cofactor is Mg(2+).

The protein resides in the cytoplasm. It carries out the reaction tRNA(Lys) + L-lysine + ATP = L-lysyl-tRNA(Lys) + AMP + diphosphate. In Listeria innocua serovar 6a (strain ATCC BAA-680 / CLIP 11262), this protein is Lysine--tRNA ligase.